Reading from the N-terminus, the 164-residue chain is Large ribosomal subunit protein uL15 (164 aa).

A disordered region spans residues 1-52 (MSLSKLKAPKGANRERTRVGRGQGSGLGKTAGRGGKGQKARSGNMHFEGFEG). A compositionally biased stretch (gly residues) spans 21 to 37 (RGQGSGLGKTAGRGGKG).

It belongs to the universal ribosomal protein uL15 family. As to quaternary structure, part of the 50S ribosomal subunit.

Its function is as follows. Binds to the 23S rRNA. This chain is Large ribosomal subunit protein uL15, found in Anaeromyxobacter sp. (strain Fw109-5).